We begin with the raw amino-acid sequence, 130 residues long: Ribonuclease P protein component 2 (130 aa).

It belongs to the eukaryotic/archaeal RNase P protein component 2 family. Consists of a catalytic RNA component and at least 4-5 protein subunits.

Its subcellular location is the cytoplasm. The enzyme catalyses Endonucleolytic cleavage of RNA, removing 5'-extranucleotides from tRNA precursor.. Its function is as follows. Part of ribonuclease P, a protein complex that generates mature tRNA molecules by cleaving their 5'-ends. The sequence is that of Ribonuclease P protein component 2 from Methanococcus maripaludis (strain C6 / ATCC BAA-1332).